A 397-amino-acid polypeptide reads, in one-letter code: Pectate lyase (397 aa).

An N-terminal signal peptide occupies residues 1–25 (MDVYRIRISVFFLLVLLTFAALTTA). N-linked (GlcNAc...) asparagine glycosylation is present at Asn134. Ca(2+)-binding residues include Asp191, Asp216, and Asp220. Asn227 carries an N-linked (GlcNAc...) asparagine glycan. Arg272 is a catalytic residue.

It belongs to the polysaccharide lyase 1 family. Requires Ca(2+) as cofactor.

The enzyme catalyses Eliminative cleavage of (1-&gt;4)-alpha-D-galacturonan to give oligosaccharides with 4-deoxy-alpha-D-galact-4-enuronosyl groups at their non-reducing ends.. It functions in the pathway glycan metabolism; pectin degradation; 2-dehydro-3-deoxy-D-gluconate from pectin: step 2/5. This is Pectate lyase from Nicotiana tabacum (Common tobacco).